Reading from the N-terminus, the 180-residue chain is Adenine phosphoribosyltransferase (180 aa).

It belongs to the purine/pyrimidine phosphoribosyltransferase family. As to quaternary structure, homodimer.

The protein localises to the cytoplasm. It carries out the reaction AMP + diphosphate = 5-phospho-alpha-D-ribose 1-diphosphate + adenine. It functions in the pathway purine metabolism; AMP biosynthesis via salvage pathway; AMP from adenine: step 1/1. In terms of biological role, catalyzes a salvage reaction resulting in the formation of AMP, that is energically less costly than de novo synthesis. This Actinobacillus succinogenes (strain ATCC 55618 / DSM 22257 / CCUG 43843 / 130Z) protein is Adenine phosphoribosyltransferase.